We begin with the raw amino-acid sequence, 571 residues long: Urease subunit alpha (571 aa).

A Urease domain is found at 132–571 (GGIDSHIHFI…LPMAQRYFLF (440 aa)). His137, His139, and Lys220 together coordinate Ni(2+). Residue Lys220 is modified to N6-carboxylysine. His222 is a binding site for substrate. The Ni(2+) site is built by His249 and His275. His323 functions as the Proton donor in the catalytic mechanism. Asp363 contributes to the Ni(2+) binding site.

It belongs to the metallo-dependent hydrolases superfamily. Urease alpha subunit family. As to quaternary structure, heterotrimer of UreA (gamma), UreB (beta) and UreC (alpha) subunits. Three heterotrimers associate to form the active enzyme. Ni cation serves as cofactor. In terms of processing, carboxylation allows a single lysine to coordinate two nickel ions.

The protein resides in the cytoplasm. The catalysed reaction is urea + 2 H2O + H(+) = hydrogencarbonate + 2 NH4(+). Its pathway is nitrogen metabolism; urea degradation; CO(2) and NH(3) from urea (urease route): step 1/1. This Kocuria rhizophila (strain ATCC 9341 / DSM 348 / NBRC 103217 / DC2201) protein is Urease subunit alpha.